We begin with the raw amino-acid sequence, 1440 residues long: ABC transporter G family member 46 (1440 aa).

The tract at residues 1–42 (MDDDVDAGEIYAVDRQREEGSASAAAFSRSPSTGRVDDDDDD) is disordered. The span at 21–32 (SASAAAFSRSPS) shows a compositional bias: low complexity. The region spanning 137-419 (ANTLHMTTRS…FKSLGFKCLE (283 aa)) is the ABC transporter 1 domain. An ATP-binding site is contributed by 170 to 177 (GSPGSGKT). Positions 497–710 (KILKANIDRE…ALNALAVNEF (214 aa)) constitute an ABC transmembrane type-2 1 domain. 7 helical membrane-spanning segments follow: residues 516–536 (LYIF…SVFI), 561–581 (AIMF…PVFF), 603–623 (TPIS…VIGF), 634–654 (FLVL…IAAL), 659–679 (VVAS…SGFI), 688–708 (WLIW…LAVN), and 745–765 (IGLG…TICL). A disordered region spans residues 794–829 (DQEPSSGGRVTNDKRYTEGGNNDEATSSNANHNSSP). The segment covering 812 to 829 (GGNNDEATSSNANHNSSP) has biased composition (polar residues). Residues 843-1095 (MTFEDIRYSI…ELIKYFESIE (253 aa)) form the ABC transporter 2 domain. An ATP-binding site is contributed by 888 to 895 (GISGAGKT). The 215-residue stretch at 1168 to 1382 (IQCLACLWKQ…TINGLVTSQF (215 aa)) folds into the ABC transmembrane type-2 2 domain. 7 helical membrane-spanning segments follow: residues 1188–1208 (IAVN…MFWG), 1219–1236 (LLSA…LGVQ), 1271–1291 (VVVE…IVYS), 1302–1322 (FFWY…YGMM), 1332–1352 (MSSI…GFLI), 1357–1377 (IPIW…INGL), and 1410–1430 (LWVA…LFGF).

It belongs to the ABC transporter superfamily. ABCG family. PDR (TC 3.A.1.205) subfamily.

The protein resides in the membrane. May be a general defense protein. The polypeptide is ABC transporter G family member 46 (Oryza sativa subsp. japonica (Rice)).